The sequence spans 764 residues: DNA-binding protein SATB1 (764 aa).

Positions 1–15 (MDHLNEATQGKEHSE) are enriched in basic and acidic residues. A disordered region spans residues 1–56 (MDHLNEATQGKEHSEMSNNVSDPKGPPAKIARLEQNGSPLGRGRLGSTGGKMQGVP). The short motif at 20–40 (VSDPKGPPAKIARLEQNGSPL) is the Nuclear localization signal element. Residues 43–52 (GRLGSTGGKM) show a composition bias toward gly residues. A Glycyl lysine isopeptide (Lys-Gly) (interchain with G-Cter in SUMO2) cross-link involves residue Lys51. Positions 71-172 (GTMLPVFCVV…VVTLKIQLHS (102 aa)) constitute a CMP domain. Position 136 is an N6-acetyllysine (Lys136). A Protein interaction motif is present at residues 139–143 (PVPLS). In terms of domain architecture, CUTL spans 175-248 (KLEDLPPEQW…WYKHFKKTKD (74 aa)). Residue Ser185 is modified to Phosphoserine. A nuclear matrix targeting sequence (NMTS) region spans residues 224 to 278 (YYANVSAAKCQEFGRWYKHFKKTKDMMVEMDSLSELSQQGANHVNFGQQPVPGNT). The Nuclear matrix targeting sequence (NMTS) signature appears at 224 to 278 (YYANVSAAKCQEFGRWYKHFKKTKDMMVEMDSLSELSQQGANHVNFGQQPVPGNT). Over residues 266-296 (HVNFGQQPVPGNTAEQPPSPAQLSHGSQPSV) the composition is skewed to polar residues. The disordered stretch occupies residues 266–307 (HVNFGQQPVPGNTAEQPPSPAQLSHGSQPSVRTPLPNLHPGL). A DNA-binding region (CUT 1) is located at residues 361–448 (LEQQVSTNTE…ERDRIYQDER (88 aa)). DNA is bound by residues Gln390, 400-410 (RTQGLLSEILR), and Asn425. The segment at 450–474 (RSLNAASAMGPAPLLSTPPSRPPQV) is disordered. The segment at residues 484–571 (NGKPENNTMN…ERDAIYEQES (88 aa)) is a DNA-binding region (CUT 2). Residues 591–650 (QIQQQQQQQQQQQQQQQPPPPPPQPQPQPQAGPRLPPRQPTVASSAESDEENRQKTRPRT) are disordered. A compositionally biased stretch (low complexity) spans 593–606 (QQQQQQQQQQQQQQ). Over residues 607–629 (QPPPPPPQPQPQPQAGPRLPPRQ) the composition is skewed to pro residues. Ser638 carries the phosphoserine modification. Residues 646-705 (TRPRTKISVEALGILQSFIQDVGLYPDEEAIQTLSAQLDLPKYTIIKFFQNQRYYLKHHG) constitute a DNA-binding region (homeobox). Lys745 is covalently cross-linked (Glycyl lysine isopeptide (Lys-Gly) (interchain with G-Cter in SUMO)).

Belongs to the CUT homeobox family. As to quaternary structure, interacts with PCAF. Interacts with sumoylated PML and HDAC1 Tat via the CMP domain. Also interacts with DYNLT3 and POLR2J2. Binds to EP300. Homodimer. Part of the nuclear protein complex gamma-globin promoter and enhancer binding factor (gamma-PE) composed at least of SATB1 and HOXB2. Interaction with CtBP1 when not acetylated stabilizes attachment to DNA and promotes transcription repression. Interacts with CUX1 (via DNA-binding domains); the interaction inhibits the attachment of both proteins to DNA. In terms of processing, sumoylated. Sumoylation promotes cleavage by caspases. Phosphorylated by PKC. Acetylated by PCAF. Phosphorylated form interacts with HDAC1, but unphosphorylated form interacts with PCAF. DNA binding properties are activated by phosphorylation and inactivated by acetylation. In opposition, gene expression is down-regulated by phosphorylation but up-regulated by acetylation. Post-translationally, cleaved at Asp-254 by caspase-3 and caspase-6 during T-cell apoptosis in thymus and during B-cell stimulation. The cleaved forms cannot dimerize and lose transcription regulation function because of impaired DNA and chromatin association. As to expression, expressed in the subventricular zone, rostral migratory stream and in the olfactory bulb (at protein level). Mainly expressed in thymus, spleen, and lymph nodes with a lower level observed in the brain.

It localises to the nucleus. The protein resides in the PML body. In terms of biological role, required for the switching of fetal globin species, and beta- and gamma-globin genes regulation during erythroid differentiation. Plays a role in chromatin organization and nuclear architecture during apoptosis. Crucial silencing factor contributing to the initiation of X inactivation mediated by Xist RNA that occurs during embryogenesis and in lymphoma. Binds to DNA at special AT-rich sequences, the consensus SATB1-binding sequence (CSBS), at nuclear matrix- or scaffold-associated regions. Thought to recognize the sugar-phosphate structure of double-stranded DNA. Transcriptional repressor controlling nuclear and viral gene expression in a phosphorylated and acetylated status-dependent manner, by binding to matrix attachment regions (MARs) of DNA and inducing a local chromatin-loop remodeling. Acts as a docking site for several chromatin remodeling enzymes and also by recruiting corepressors (HDACs) or coactivators (HATs) directly to promoters and enhancers. Modulates genes that are essential in the maturation of the immune T-cell CD8SP from thymocytes. Promotes neuronal differentiation of neural stem/progenitor cells in the adult subventricular zone, possibly by positively regulating the expression of NEUROD1. This is DNA-binding protein SATB1 (Satb1) from Mus musculus (Mouse).